Reading from the N-terminus, the 398-residue chain is Putative L-rhamnonate dehydratase (398 aa).

Substrate contacts are provided by His29 and Arg55. Mg(2+)-binding residues include Asp221, Glu247, and Glu274. Residue His324 is the Proton acceptor of the active site. Glu344 serves as a coordination point for substrate.

Belongs to the mandelate racemase/muconate lactonizing enzyme family. RhamD subfamily. Requires Mg(2+) as cofactor.

It carries out the reaction L-rhamnonate = 2-dehydro-3-deoxy-L-rhamnonate + H2O. Its function is as follows. Catalyzes the dehydration of L-rhamnonate to 2-keto-3-deoxy-L-rhamnonate (KDR). This chain is Putative L-rhamnonate dehydratase, found in Caldivirga maquilingensis (strain ATCC 700844 / DSM 13496 / JCM 10307 / IC-167).